A 396-amino-acid chain; its full sequence is Purine ribonucleoside efflux pump NepI (396 aa).

Over 1 to 21 the chain is Cytoplasmic; that stretch reads MSEFIAENRGADAITRPNWSA. A helical transmembrane segment spans residues 22-42; the sequence is VFSVAFCVACLIIVEFLPVSL. Residues 43-54 lie on the Periplasmic side of the membrane; that stretch reads LTPMAQDLGISE. The helical transmembrane segment at 55–75 threads the bilayer; sequence GVAGQSVTVTAFVAMFASLFI. Residues 76–85 lie on the Cytoplasmic side of the membrane; sequence TQTIQATDRR. Residues 86 to 106 form a helical membrane-spanning segment; that stretch reads YVVILFAVLLTLSCLLVSFAN. Position 107 (serine 107) is a topological domain, periplasmic. A helical transmembrane segment spans residues 108–128; it reads FSLLLIGRACLGLALGGFWAM. The Cytoplasmic portion of the chain corresponds to 129-147; that stretch reads SASLTMRLVPPRTVPKALS. A helical membrane pass occupies residues 148 to 168; it reads VIFGAVSIALVIAAPLGCFLG. At 169–175 the chain is on the periplasmic side; the sequence is ELIGWRN. Residues 176–196 form a helical membrane-spanning segment; that stretch reads VFNAAAAMGVLCIFWIIKSLP. Residues 197–215 are Cytoplasmic-facing; the sequence is SLPGEPSHQKQNTFRLLQR. The chain crosses the membrane as a helical span at residues 216-236; the sequence is PGVMAGMIAIFMSFAGQFAFF. Residues 237–255 are Periplasmic-facing; sequence TYIRPVYMTLAGFGVDGLT. The helical transmembrane segment at 256–276 threads the bilayer; the sequence is LVLLSFGIASFVGTSLSSFIL. The Cytoplasmic portion of the chain corresponds to 277 to 281; sequence KRSVK. Residues 282–302 form a helical membrane-spanning segment; sequence LALAGAPFVLALSALVLTLWG. The Periplasmic segment spans residues 303-305; the sequence is SDK. The helical transmembrane segment at 306-326 threads the bilayer; sequence IVATGVAIIWGLTFALIPVGW. The Cytoplasmic segment spans residues 327–343; that stretch reads STWITRSLADQAEKAGS. A helical transmembrane segment spans residues 344–364; sequence IQVAVIQLANTCGAAIGGYAL. The Periplasmic segment spans residues 365 to 366; that stretch reads DN. A helical transmembrane segment spans residues 367–387; it reads IGLTSPLMLSGTLMLLTALLV. Over 388–396 the chain is Cytoplasmic; sequence TAKVKMKKS.

The protein belongs to the major facilitator superfamily. DHA1 family. NepI (TC 2.A.1.2.26) subfamily.

It is found in the cell inner membrane. It carries out the reaction inosine(in) + H(+)(out) = inosine(out) + H(+)(in). The enzyme catalyses guanosine(in) + H(+)(out) = guanosine(out) + H(+)(in). Involved in the efflux of purine ribonucleosides, such as inosine and guanosine. This Escherichia coli O157:H7 protein is Purine ribonucleoside efflux pump NepI.